Consider the following 548-residue polypeptide: Sulochrin halogenase gedL (548 aa).

3 residues coordinate FAD: Gly14, Ala17, and Glu47. Residues Ser333 and Gly334 each coordinate chloride. Residue Val335 coordinates FAD.

It belongs to the flavin-dependent halogenase family.

It catalyses the reaction sulochrin + 2 FADH2 + 2 chloride + 2 O2 = dihydrogeodin + 2 FAD + 4 H2O + H(+). The protein operates within secondary metabolite biosynthesis. Its function is as follows. Sulochrin halogenase; part of the gene cluster that mediates the biosynthesis of geodin, an intermediate in the biosynthesis of other natural products. The pathway begins with the synthesis of atrochrysone thioester by the polyketide synthase (PKS) gedC. The atrochrysone carboxyl ACP thioesterase gedB then breaks the thioester bond and releases the atrochrysone carboxylic acid from gedC. The atrochrysone carboxylic acid is then converted to atrochrysone which is further transformed into emodinanthrone. The next step is performed by the emodinanthrone oxygenase gedH that catalyzes the oxidation of emodinanthrone to emodin. Emodin O-methyltransferase encoded probably by gedA then catalyzes methylation of the 8-hydroxy group of emodin to form questin. Ring cleavage of questin by questin oxidase gedK leads to desmethylsulochrin via several intermediates including questin epoxide. Another methylation step probably catalyzed by methyltransferase gedG leads to the formation of sulochrin which is further converted to dihydrogeodin by the sulochrin halogenase gedL. Finally, the dihydrogeodin oxidase gedJ catalyzes the stereospecific phenol oxidative coupling reaction converting dihydrogeodin to geodin. This Aspergillus terreus (strain NIH 2624 / FGSC A1156) protein is Sulochrin halogenase gedL.